The sequence spans 193 residues: dCTP deaminase (193 aa).

DCTP is bound by residues 110 to 115, aspartate 128, 136 to 138, tyrosine 171, lysine 178, and glutamine 182; these read RSSLAR and VLE. Glutamate 138 serves as the catalytic Proton donor/acceptor.

This sequence belongs to the dCTP deaminase family. As to quaternary structure, homotrimer.

The catalysed reaction is dCTP + H2O + H(+) = dUTP + NH4(+). It participates in pyrimidine metabolism; dUMP biosynthesis; dUMP from dCTP (dUTP route): step 1/2. Catalyzes the deamination of dCTP to dUTP. In Buchnera aphidicola subsp. Acyrthosiphon pisum (strain APS) (Acyrthosiphon pisum symbiotic bacterium), this protein is dCTP deaminase.